The following is a 457-amino-acid chain: DNA repair protein RadA (457 aa).

The C4-type zinc finger occupies 12–29 (CQACGYESAKWMGKCPNC). Position 97–104 (97–104 (GDPGIGKS)) interacts with ATP. The RadA KNRFG motif motif lies at 254–258 (KNRFG). Residues 353–457 (DAYLKAAGGV…GEALKKALPD (105 aa)) form a lon-protease-like region.

Belongs to the RecA family. RadA subfamily.

Its function is as follows. DNA-dependent ATPase involved in processing of recombination intermediates, plays a role in repairing DNA breaks. Stimulates the branch migration of RecA-mediated strand transfer reactions, allowing the 3' invading strand to extend heteroduplex DNA faster. Binds ssDNA in the presence of ADP but not other nucleotides, has ATPase activity that is stimulated by ssDNA and various branched DNA structures, but inhibited by SSB. Does not have RecA's homology-searching function. The polypeptide is DNA repair protein RadA (Listeria monocytogenes serovar 1/2a (strain ATCC BAA-679 / EGD-e)).